We begin with the raw amino-acid sequence, 153 residues long: Alpha-amylase type B isozyme (153 aa).

Substrate is bound by residues K19, G25–W27, H38, Q44, K123, and W150.

Belongs to the glycosyl hydrolase 13 family. As to quaternary structure, monomer. Ca(2+) is required as a cofactor.

The enzyme catalyses Endohydrolysis of (1-&gt;4)-alpha-D-glucosidic linkages in polysaccharides containing three or more (1-&gt;4)-alpha-linked D-glucose units.. The polypeptide is Alpha-amylase type B isozyme (AMY1.4) (Hordeum vulgare (Barley)).